A 1300-amino-acid polypeptide reads, in one-letter code: Kinesin-like protein KIN-4C (1300 aa).

The region spanning 6-360 (CVRVAVNIRP…LKYANRARNI (355 aa)) is the Kinesin motor domain. 85–92 (GQTGSGKT) contacts ATP. 3 coiled-coil regions span residues 580–615 (TSVL…LASI), 653–697 (QLMR…RAWK), and 781–823 (EVTV…AKIS). 2 stretches are compositionally biased toward basic and acidic residues: residues 956-971 (ADEN…KQET) and 1001-1013 (EWKP…RESE). 4 disordered regions span residues 956 to 1018 (ADEN…ESVI), 1097 to 1132 (NADG…QQQV), 1144 to 1187 (ALAD…RKKW), and 1200 to 1300 (PALP…TRRV). Polar residues-rich tracts occupy residues 1169–1180 (IGNTTGKSNVPR), 1205–1222 (THTN…TVDS), 1230–1239 (NSDSGESNSI), and 1275–1288 (GFVQ…SGSR). Basic and acidic residues predominate over residues 1289–1300 (TSDEKENHTRRV).

This sequence belongs to the TRAFAC class myosin-kinesin ATPase superfamily. Kinesin family. KIN-4 subfamily. Homodimer.

Its function is as follows. Kinesin-like motor protein involved in the control of the oriented deposition of cellulose microfibrils. The protein is Kinesin-like protein KIN-4C of Arabidopsis thaliana (Mouse-ear cress).